The following is a 347-amino-acid chain: Holliday junction branch migration complex subunit RuvB (347 aa).

A large ATPase domain (RuvB-L) region spans residues 1 to 186 (MKDENSINFL…FGITARFELY (186 aa)). ATP is bound by residues Leu-25, Arg-26, Gly-67, Lys-70, Thr-71, Thr-72, 133 to 135 (EDY), Arg-176, Tyr-186, and Arg-223. Thr-71 is a binding site for Mg(2+). Residues 187–257 (SEIELVEIIK…IVAIGLEMLR (71 aa)) are small ATPAse domain (RuvB-S). The interval 260–347 (GEGLDEQDRN…NLNENQRVSF (88 aa)) is head domain (RuvB-H). DNA-binding residues include Arg-315 and Arg-320.

The protein belongs to the RuvB family. Homohexamer. Forms an RuvA(8)-RuvB(12)-Holliday junction (HJ) complex. HJ DNA is sandwiched between 2 RuvA tetramers; dsDNA enters through RuvA and exits via RuvB. An RuvB hexamer assembles on each DNA strand where it exits the tetramer. Each RuvB hexamer is contacted by two RuvA subunits (via domain III) on 2 adjacent RuvB subunits; this complex drives branch migration. In the full resolvosome a probable DNA-RuvA(4)-RuvB(12)-RuvC(2) complex forms which resolves the HJ.

Its subcellular location is the cytoplasm. The enzyme catalyses ATP + H2O = ADP + phosphate + H(+). Functionally, the RuvA-RuvB-RuvC complex processes Holliday junction (HJ) DNA during genetic recombination and DNA repair, while the RuvA-RuvB complex plays an important role in the rescue of blocked DNA replication forks via replication fork reversal (RFR). RuvA specifically binds to HJ cruciform DNA, conferring on it an open structure. The RuvB hexamer acts as an ATP-dependent pump, pulling dsDNA into and through the RuvAB complex. RuvB forms 2 homohexamers on either side of HJ DNA bound by 1 or 2 RuvA tetramers; 4 subunits per hexamer contact DNA at a time. Coordinated motions by a converter formed by DNA-disengaged RuvB subunits stimulates ATP hydrolysis and nucleotide exchange. Immobilization of the converter enables RuvB to convert the ATP-contained energy into a lever motion, pulling 2 nucleotides of DNA out of the RuvA tetramer per ATP hydrolyzed, thus driving DNA branch migration. The RuvB motors rotate together with the DNA substrate, which together with the progressing nucleotide cycle form the mechanistic basis for DNA recombination by continuous HJ branch migration. Branch migration allows RuvC to scan DNA until it finds its consensus sequence, where it cleaves and resolves cruciform DNA. The protein is Holliday junction branch migration complex subunit RuvB of Borreliella afzelii (strain PKo) (Borrelia afzelii).